Consider the following 680-residue polypeptide: Structure-specific endonuclease subunit SLX4 (680 aa).

3 disordered regions span residues 15–92, 141–183, and 450–490; these read EVAK…EPVV, ESSS…STQQ, and LGSG…ATRL. Acidic residues predominate over residues 22–33; the sequence is DSDEPIIDEDDL. Basic and acidic residues predominate over residues 60 to 86; sequence NNSKDTFKETPLELVDKEEAIEDKAPN. Positions 156-174 are enriched in basic residues; it reads LKSKKITKPKLTKTSKRTK. Residues 473 to 490 are compositionally biased toward polar residues; it reads TVISRSPQSTRTPQATRL.

The protein belongs to the SLX4 family. Forms a heterodimer with SLX1. Phosphorylated in response to DNA damage.

Its subcellular location is the nucleus. Its function is as follows. Regulatory subunit of the SLX1-SLX4 structure-specific endonuclease that resolves DNA secondary structures generated during DNA repair and recombination. Has endonuclease activity towards branched DNA substrates, introducing single-strand cuts in duplex DNA close to junctions with ss-DNA. In Vanderwaltozyma polyspora (strain ATCC 22028 / DSM 70294 / BCRC 21397 / CBS 2163 / NBRC 10782 / NRRL Y-8283 / UCD 57-17) (Kluyveromyces polysporus), this protein is Structure-specific endonuclease subunit SLX4.